The chain runs to 1288 residues: Disease resistance protein RRS1 (1288 aa).

The TIR domain maps to 5–146; the sequence is EKDEEFVCIS…EIVRDVYETH (142 aa). The tract at residues 25–26 is important for interaction with RPS4; it reads SH. The NB-ARC domain occupies 170–421; sequence IGIRCVGIWG…LLEGCGFFPH (252 aa). Position 179 to 186 (179 to 186) interacts with ATP; it reads GMPGIGKT. 12 LRR repeats span residues 498–522, 535–553, 554–575, 577–598, 621–646, 665–688, 697–720, 740–764, 766–791, 792–807, 808–829, and 830–852; these read SEEI…AFKN, NPEV…HSLP, NELR…NFDP, HLVE…TKNL, AENL…RLLR, PPNI…TVKP, LTEI…NSSC, LPNM…SIQG, PRFL…SLEI, LNAH…NMAN, LEFL…QGFP, and RNLK…PLSL. Residues 986-1003 carry the Nuclear localization signal motif; that stretch reads RKFHCWAPWQVVPKVRKD. A DNA-binding region (WRKY) is located at residues 1202–1270; sequence IPAIDEGDLW…YLSEHNHPRP (69 aa). Residues 1267–1288 form a disordered region; it reads HPRPTKRKALADSTRSTSSSIC. Residues 1279–1288 are compositionally biased toward polar residues; the sequence is STRSTSSSIC.

This sequence belongs to the disease resistance TIR-NB-LRR family. Interacts with PopP2, a R.solanacearum type III effector. Interacts with RPS4.

The protein resides in the nucleus. It is found in the cytoplasm. In terms of biological role, transcription factor. Interacts specifically with the W box (5'-(T)TGAC[CT]-3'), a frequently occurring elicitor-responsive cis-acting element. Also acts as a disease resistance protein involved in resistance to fungal and bacterial pathogens, including R.solanacearum, P.syringae pv. tomato and C.higginsianum. Heterodimerization with RPS4 is required to form a functional complex to recognize AvrRps4 and PopP2. Contributes to temperature-conditioned RPS4 auto-immunity. This Arabidopsis thaliana (Mouse-ear cress) protein is Disease resistance protein RRS1.